The chain runs to 300 residues: 4-diphosphocytidyl-2-C-methyl-D-erythritol kinase (300 aa).

Lys-12 is a catalytic residue. Pro-94–Ser-104 contributes to the ATP binding site. The active site involves Asp-136.

Belongs to the GHMP kinase family. IspE subfamily.

The enzyme catalyses 4-CDP-2-C-methyl-D-erythritol + ATP = 4-CDP-2-C-methyl-D-erythritol 2-phosphate + ADP + H(+). Its pathway is isoprenoid biosynthesis; isopentenyl diphosphate biosynthesis via DXP pathway; isopentenyl diphosphate from 1-deoxy-D-xylulose 5-phosphate: step 3/6. Functionally, catalyzes the phosphorylation of the position 2 hydroxy group of 4-diphosphocytidyl-2C-methyl-D-erythritol. The chain is 4-diphosphocytidyl-2-C-methyl-D-erythritol kinase from Verminephrobacter eiseniae (strain EF01-2).